A 224-amino-acid chain; its full sequence is MRLVIARCRVDYVGRLTAHLPTARRLLLIKADGSVSIHADDRAYKPLNWMSPPCWLVEDTVEDAEALWVVTNKAGEELRITIEEIEHDSSHELGVDPGLVKDGVEAHLQELLAEHVETLGSGYTLVRREYMTAIGPVDLLCRNADGASVAVEIKRRGDIDGVEQLTRYLELLNRDPLLAPVSGVFAAQQIKPQAKTLATDRGIRCLVLDYEALRGTESTEFRLF.

The protein belongs to the NucS endonuclease family.

The protein resides in the cytoplasm. Cleaves both 3' and 5' ssDNA extremities of branched DNA structures. The polypeptide is Endonuclease NucS (Rhodococcus jostii (strain RHA1)).